The sequence spans 157 residues: Urease accessory protein UreE (157 aa).

Belongs to the UreE family.

It is found in the cytoplasm. Involved in urease metallocenter assembly. Binds nickel. Probably functions as a nickel donor during metallocenter assembly. The polypeptide is Urease accessory protein UreE (Paenarthrobacter aurescens (strain TC1)).